Reading from the N-terminus, the 446-residue chain is Thymidine phosphorylase (446 aa).

Belongs to the thymidine/pyrimidine-nucleoside phosphorylase family. As to quaternary structure, homodimer.

It catalyses the reaction thymidine + phosphate = 2-deoxy-alpha-D-ribose 1-phosphate + thymine. Its pathway is pyrimidine metabolism; dTMP biosynthesis via salvage pathway; dTMP from thymine: step 1/2. Its function is as follows. The enzymes which catalyze the reversible phosphorolysis of pyrimidine nucleosides are involved in the degradation of these compounds and in their utilization as carbon and energy sources, or in the rescue of pyrimidine bases for nucleotide synthesis. The sequence is that of Thymidine phosphorylase from Idiomarina loihiensis (strain ATCC BAA-735 / DSM 15497 / L2-TR).